A 470-amino-acid chain; its full sequence is DNA primase large subunit (470 aa).

[4Fe-4S] cluster contacts are provided by Cys279, Cys358, Cys376, and Cys414. The interval 449 to 470 (EEKKSAKQSNNKENENQSIDEK) is disordered.

It belongs to the eukaryotic-type primase large subunit family. As to quaternary structure, heterodimer of a small subunit and a large subunit. It depends on [4Fe-4S] cluster as a cofactor.

Its function is as follows. DNA primase is the polymerase that synthesizes small RNA primers for the Okazaki fragments made during discontinuous DNA replication. The polypeptide is DNA primase large subunit (prim2) (Dictyostelium discoideum (Social amoeba)).